The following is a 274-amino-acid chain: Transcription factor MYB32 (274 aa).

HTH myb-type domains lie at 9 to 61 and 62 to 116; these read KDHT…INYL and RPDL…KRKL. DNA-binding regions (H-T-H motif) lie at residues 37–61 and 89–112; these read WRSL…INYL and WSLI…NTHV. The interval 123-144 is disordered; sequence PATHRPINETKTSQDSSDSSKT.

As to expression, mostly expressed in roots, and, to a lower extent, in stems, flower buds, and siliques.

The protein localises to the nucleus. The chain is Transcription factor MYB32 (MYB32) from Arabidopsis thaliana (Mouse-ear cress).